Consider the following 476-residue polypeptide: Cysteine--tRNA ligase (476 aa).

Residue C28 participates in Zn(2+) binding. The short motif at 30 to 40 (PTVYDHTHLGH) is the 'HIGH' region element. The Zn(2+) site is built by C208, H233, and E237. The 'KMSKS' region motif lies at 265–269 (KMSKS). K268 is an ATP binding site.

This sequence belongs to the class-I aminoacyl-tRNA synthetase family. Requires Zn(2+) as cofactor.

Its subcellular location is the cytoplasm. The catalysed reaction is tRNA(Cys) + L-cysteine + ATP = L-cysteinyl-tRNA(Cys) + AMP + diphosphate. This chain is Cysteine--tRNA ligase, found in Methanococcus maripaludis (strain C6 / ATCC BAA-1332).